Reading from the N-terminus, the 561-residue chain is DNA ligase B (561 aa).

The N6-AMP-lysine intermediate role is filled by K125.

It belongs to the NAD-dependent DNA ligase family. LigB subfamily.

It catalyses the reaction NAD(+) + (deoxyribonucleotide)n-3'-hydroxyl + 5'-phospho-(deoxyribonucleotide)m = (deoxyribonucleotide)n+m + AMP + beta-nicotinamide D-nucleotide.. Functionally, catalyzes the formation of phosphodiester linkages between 5'-phosphoryl and 3'-hydroxyl groups in double-stranded DNA using NAD as a coenzyme and as the energy source for the reaction. This Salmonella enteritidis PT4 (strain P125109) protein is DNA ligase B.